The primary structure comprises 277 residues: Glutamate racemase (277 aa).

Substrate-binding positions include 13-14 (DS) and 45-46 (YG). Cys-76 functions as the Proton donor/acceptor in the catalytic mechanism. 77 to 78 (NT) lines the substrate pocket. The Proton donor/acceptor role is filled by Cys-186. 187-188 (TH) lines the substrate pocket.

This sequence belongs to the aspartate/glutamate racemases family.

It catalyses the reaction L-glutamate = D-glutamate. It participates in cell wall biogenesis; peptidoglycan biosynthesis. In terms of biological role, provides the (R)-glutamate required for cell wall biosynthesis. The chain is Glutamate racemase from Ralstonia nicotianae (strain ATCC BAA-1114 / GMI1000) (Ralstonia solanacearum).